We begin with the raw amino-acid sequence, 874 residues long: Leucine--tRNA ligase (874 aa).

The 'HIGH' region motif lies at 47–57 (PYPSGKLHMGH). The 'KMSKS' region motif lies at 636-640 (KMSKS). Lysine 639 contributes to the ATP binding site.

The protein belongs to the class-I aminoacyl-tRNA synthetase family.

It localises to the cytoplasm. It catalyses the reaction tRNA(Leu) + L-leucine + ATP = L-leucyl-tRNA(Leu) + AMP + diphosphate. The chain is Leucine--tRNA ligase from Acinetobacter baumannii (strain AB307-0294).